Consider the following 359-residue polypeptide: MAGVACLGKTADADEWCDSGLGSLGPDAAAPGGPGLGAELGPELSWAPLVFGYVTEDGDTALHLAVIHQHEPFLDFLLGFSAGTEYLDLQNDLGQTALHLAAILGEASTVEKLYAAGAGVLVAERGGHTALHLACRVRAHTCACVLLQPRPSHPRDASDTYLTQSQDCTPDTSHAPAAVDSQPNPENEEEPRDEDWRLQLEAENYDGHTPLHVAVIHKDAEMVRLLRDAGADLNKPEPTCGRTPLHLAVEAQAASVLELLLKAGADPTARMYGGRTPLGSALLRPNPILARLLRAHGAPEPEDEDDKLSPCSSSGSDSDSDNRDEGDEYDDIVVHSGRSQNRQPPSPASKPLPDDPNPA.

Residues serine 19 and serine 23 each carry the phosphoserine; by RPS6KA1 modification. ANK repeat units follow at residues 57–86 (DGDTALHLAVIHQHEPFLDFLLGFSAGTEY), 93–122 (LGQTALHLAAILGEASTVEKLYAAGAGVLV), and 126–155 (GGHTALHLACRVRAHTCACVLLQPRPSHPR). The segment at 153 to 194 (HPRDASDTYLTQSQDCTPDTSHAPAAVDSQPNPENEEEPRDE) is disordered. The segment covering 160–172 (TYLTQSQDCTPDT) has biased composition (polar residues). 3 ANK repeats span residues 206-235 (DGHTPLHVAVIHKDAEMVRLLRDAGADLNK), 240-269 (CGRTPLHLAVEAQAASVLELLLKAGADPTA), and 273-302 (GGRTPLGSALLRPNPILARLLRAHGAPEPE). The tract at residues 298–359 (APEPEDEDDK…KPLPDDPNPA (62 aa)) is disordered. Phosphoserine occurs at positions 313 and 318. Over residues 318-331 (SDSDNRDEGDEYDD) the composition is skewed to acidic residues. Pro residues predominate over residues 344-359 (PPSPASKPLPDDPNPA).

The protein belongs to the NF-kappa-B inhibitor family. Interacts with THRB (via ligand-binding domain). Interacts with RELA and REL. Interacts with COMMD1. Interacts with inhibitor kappa B-interacting Ras-like NKIRAS1 and NKIRAS2. Phosphorylated by RPS6KA1; followed by degradation. Interaction with NKIRAS1 and NKIRAS2 probably prevents phosphorylation. As to expression, highly expressed in testis followed by spleen.

It is found in the cytoplasm. Its subcellular location is the nucleus. Inhibits NF-kappa-B by complexing with and trapping it in the cytoplasm. However, the unphosphorylated form resynthesized after cell stimulation is able to bind NF-kappa-B allowing its transport to the nucleus and protecting it to further NFKBIA-dependent inactivation. Association with inhibitor kappa B-interacting NKIRAS1 and NKIRAS2 prevent its phosphorylation rendering it more resistant to degradation, explaining its slower degradation. This chain is NF-kappa-B inhibitor beta (Nfkbib), found in Mus musculus (Mouse).